The following is a 207-amino-acid chain: Transcription factor DYT1 (207 aa).

Positions 1-38 are disordered; the sequence is MGGGSRFQEPVRMSRRKQVTKEKEEDENFKSPNLEAER. The region spanning 28 to 77 is the bHLH domain; that stretch reads NFKSPNLEAERRRREKLHCRLMALRSHVPIVTNMTKASIVEDAITYIGEL.

In terms of assembly, homodimer. In terms of tissue distribution, mostly expressed in anthers, and, to a lower extent, in young inflorescences undergoing meiosis and siliques.

The protein localises to the nucleus. Its function is as follows. Transcription factor. Involved in the control of tapetum development. Required for male fertility and pollen differentiation, especially during callose deposition. This Arabidopsis thaliana (Mouse-ear cress) protein is Transcription factor DYT1.